Reading from the N-terminus, the 271-residue chain is UPF0758 protein ACIAD3126 (271 aa).

The 123-residue stretch at 120 to 242 (NLNSSRLVLD…TFSFAERALL (123 aa)) folds into the MPN domain. The Zn(2+) site is built by His191, His193, and Asp204. A JAMM motif motif is present at residues 191 to 204 (HNHPFGKAEPSAAD).

It belongs to the UPF0758 family.

In Acinetobacter baylyi (strain ATCC 33305 / BD413 / ADP1), this protein is UPF0758 protein ACIAD3126.